We begin with the raw amino-acid sequence, 173 residues long: Large ribosomal subunit protein uL5 (173 aa).

The protein belongs to the universal ribosomal protein uL5 family. As to quaternary structure, part of the 50S ribosomal subunit; contacts the 5S rRNA and probably tRNA. Forms a bridge to the 30S subunit in the 70S ribosome.

Its function is as follows. This is one of the proteins that bind and probably mediate the attachment of the 5S RNA into the large ribosomal subunit, where it forms part of the central protuberance. In the 70S ribosome it contacts protein S13 of the 30S subunit (bridge B1b), connecting the 2 subunits; this bridge is implicated in subunit movement. May contact the P site tRNA; the 5S rRNA and some of its associated proteins might help stabilize positioning of ribosome-bound tRNAs. The sequence is that of Large ribosomal subunit protein uL5 from Nitrosopumilus maritimus (strain SCM1).